The primary structure comprises 300 residues: Geranylgeranyl diphosphate synthase (300 aa).

Isopentenyl diphosphate contacts are provided by K50, R53, and H82. Mg(2+) contacts are provided by D89 and D95. Residue R100 coordinates (2E,6E)-farnesyl diphosphate. R101 is a binding site for isopentenyl diphosphate. (2E,6E)-farnesyl diphosphate is bound by residues K186, T187, and Q224.

It belongs to the FPP/GGPP synthase family. Requires Mg(2+) as cofactor.

Its subcellular location is the plastid. It is found in the cyanelle. It carries out the reaction isopentenyl diphosphate + (2E,6E)-farnesyl diphosphate = (2E,6E,10E)-geranylgeranyl diphosphate + diphosphate. It participates in isoprenoid biosynthesis; geranylgeranyl diphosphate biosynthesis; geranylgeranyl diphosphate from farnesyl diphosphate and isopentenyl diphosphate: step 1/1. Its function is as follows. Catalyzes the condensation of farnesyl diphosphate (FPP) and isopentenyl diphosphate (IPP) to yield geranylgeranyl diphosphate (GGPP) needed for biosynthesis of carotenoids and diterpenes. This chain is Geranylgeranyl diphosphate synthase (crtE), found in Cyanophora paradoxa.